The primary structure comprises 137 residues: Glutaredoxin-C9 (137 aa).

Residues 32–136 form the Glutaredoxin domain; that stretch reads GERVRMVVEE…PILKEVGALW (105 aa). Residues Cys-52 and Cys-55 are joined by a disulfide bond. The Responsive for interaction with TGA factors signature appears at 134–137; the sequence is ALWL.

Belongs to the glutaredoxin family. CC-type subfamily. Interacts with TGA2 and TGA6.

Its subcellular location is the cytoplasm. It localises to the nucleus. Has a glutathione-disulfide oxidoreductase activity in the presence of NADPH and glutathione reductase. Reduces low molecular weight disulfides and proteins. This chain is Glutaredoxin-C9 (GRXC9), found in Arabidopsis thaliana (Mouse-ear cress).